Consider the following 175-residue polypeptide: Cytochrome c homolog (175 aa).

The Cytoplasmic segment spans residues 1 to 8 (MTGKELNK). A helical; Signal-anchor membrane pass occupies residues 9–29 (IVAAILFASLIAMIVGFIANI). Residues 30–175 (LYKPNLHVLH…LFLKNYVHDQ (146 aa)) lie on the Periplasmic side of the membrane. Positions 84, 87, 88, and 150 each coordinate heme c.

The protein belongs to the cytochrome c family. In terms of processing, binds 1 heme c group covalently per subunit.

The protein localises to the cell membrane. Functionally, may be involved in electron transfer from bc1 complex to aa3. The protein is Cytochrome c homolog (cycM) of Rickettsia prowazekii (strain Madrid E).